A 114-amino-acid chain; its full sequence is Large ribosomal subunit protein uL22 (114 aa).

This sequence belongs to the universal ribosomal protein uL22 family. As to quaternary structure, part of the 50S ribosomal subunit.

This protein binds specifically to 23S rRNA; its binding is stimulated by other ribosomal proteins, e.g. L4, L17, and L20. It is important during the early stages of 50S assembly. It makes multiple contacts with different domains of the 23S rRNA in the assembled 50S subunit and ribosome. Functionally, the globular domain of the protein is located near the polypeptide exit tunnel on the outside of the subunit, while an extended beta-hairpin is found that lines the wall of the exit tunnel in the center of the 70S ribosome. The protein is Large ribosomal subunit protein uL22 of Streptococcus agalactiae serotype Ia (strain ATCC 27591 / A909 / CDC SS700).